A 494-amino-acid polypeptide reads, in one-letter code: Bifunctional pantoate ligase/cytidylate kinase (494 aa).

Positions M1 to A258 are pantoate--beta-alanine ligase. M7 to H14 provides a ligand contact to ATP. Catalysis depends on H14, which acts as the Proton donor. Q41 is a (R)-pantoate binding site. Beta-alanine is bound at residue Q41. G130 to D133 serves as a coordination point for ATP. Q136 contacts (R)-pantoate. Residues V159 and S167–R170 each bind ATP. The tract at residues F259–V494 is cytidylate kinase.

It in the N-terminal section; belongs to the pantothenate synthetase family. This sequence in the C-terminal section; belongs to the cytidylate kinase family. Type 1 subfamily.

It is found in the cytoplasm. It catalyses the reaction (R)-pantoate + beta-alanine + ATP = (R)-pantothenate + AMP + diphosphate + H(+). It carries out the reaction CMP + ATP = CDP + ADP. The enzyme catalyses dCMP + ATP = dCDP + ADP. It functions in the pathway cofactor biosynthesis; (R)-pantothenate biosynthesis; (R)-pantothenate from (R)-pantoate and beta-alanine: step 1/1. In terms of biological role, catalyzes the condensation of pantoate with beta-alanine in an ATP-dependent reaction via a pantoyl-adenylate intermediate. Its function is as follows. Catalyzes the transfer of a phosphate group from ATP to either CMP or dCMP to form CDP or dCDP and ADP, respectively. The sequence is that of Bifunctional pantoate ligase/cytidylate kinase from Synechococcus sp. (strain CC9311).